The sequence spans 340 residues: 4-hydroxy-2-oxovalerate aldolase (340 aa).

In terms of domain architecture, Pyruvate carboxyltransferase spans 4-255 (VVIHDPTLRD…ATGIDLYALL (252 aa)). Position 12-13 (12-13 (RD)) interacts with substrate. D13 contributes to the Mn(2+) binding site. H16 (proton acceptor) is an active-site residue. Substrate-binding residues include S166 and H194. Residues H194 and H196 each coordinate Mn(2+).

The protein belongs to the 4-hydroxy-2-oxovalerate aldolase family.

It catalyses the reaction (S)-4-hydroxy-2-oxopentanoate = acetaldehyde + pyruvate. This chain is 4-hydroxy-2-oxovalerate aldolase, found in Streptomyces griseus subsp. griseus (strain JCM 4626 / CBS 651.72 / NBRC 13350 / KCC S-0626 / ISP 5235).